The following is a 448-amino-acid chain: N-succinylarginine dihydrolase (448 aa).

Substrate is bound by residues G19–S28, N110, and H137–R138. Residue E174 is part of the active site. R214 provides a ligand contact to substrate. H250 is an active-site residue. The substrate site is built by D252 and N365. C371 acts as the Nucleophile in catalysis.

This sequence belongs to the succinylarginine dihydrolase family. Homodimer.

The enzyme catalyses N(2)-succinyl-L-arginine + 2 H2O + 2 H(+) = N(2)-succinyl-L-ornithine + 2 NH4(+) + CO2. The protein operates within amino-acid degradation; L-arginine degradation via AST pathway; L-glutamate and succinate from L-arginine: step 2/5. In terms of biological role, catalyzes the hydrolysis of N(2)-succinylarginine into N(2)-succinylornithine, ammonia and CO(2). In Ectopseudomonas mendocina (strain ymp) (Pseudomonas mendocina), this protein is N-succinylarginine dihydrolase.